Here is a 527-residue protein sequence, read N- to C-terminus: Bifunctional purine biosynthesis protein PurH (527 aa).

The region spanning 1 to 144 (MNRRALISVS…KNHESVAIIV (144 aa)) is the MGS-like domain.

Belongs to the PurH family.

It carries out the reaction (6R)-10-formyltetrahydrofolate + 5-amino-1-(5-phospho-beta-D-ribosyl)imidazole-4-carboxamide = 5-formamido-1-(5-phospho-D-ribosyl)imidazole-4-carboxamide + (6S)-5,6,7,8-tetrahydrofolate. It catalyses the reaction IMP + H2O = 5-formamido-1-(5-phospho-D-ribosyl)imidazole-4-carboxamide. The protein operates within purine metabolism; IMP biosynthesis via de novo pathway; 5-formamido-1-(5-phospho-D-ribosyl)imidazole-4-carboxamide from 5-amino-1-(5-phospho-D-ribosyl)imidazole-4-carboxamide (10-formyl THF route): step 1/1. It functions in the pathway purine metabolism; IMP biosynthesis via de novo pathway; IMP from 5-formamido-1-(5-phospho-D-ribosyl)imidazole-4-carboxamide: step 1/1. In Heliobacterium modesticaldum (strain ATCC 51547 / Ice1), this protein is Bifunctional purine biosynthesis protein PurH.